The following is a 190-amino-acid chain: Vascular endothelial growth factor A (190 aa).

Residues 1–26 (MNFLLSWVHWSLALLLYLHHAKWSQA) form the signal peptide. 3 disulfide bridges follow: Cys-51/Cys-93, Cys-82/Cys-127, and Cys-86/Cys-129. Asn-100 carries N-linked (GlcNAc...) asparagine glycosylation.

Belongs to the PDGF/VEGF growth factor family. As to quaternary structure, homodimer; disulfide-linked. Also found as heterodimer with PGF. Interacts with NRP1. Interacts with isoform 2 of BSG. Interacts with CD82; this interaction inhibits VEGFA-mediated signaling pathway.

The protein resides in the secreted. Growth factor active in angiogenesis, vasculogenesis and endothelial cell growth. Induces endothelial cell proliferation, promotes cell migration, inhibits apoptosis and induces permeabilization of blood vessels. Binds to the FLT1/VEGFR1 and KDR/VEGFR2 receptors, heparan sulfate and heparin. Binding to NRP1 receptor initiates a signaling pathway needed for motor neuron axon guidance and cell body migration, including for the caudal migration of facial motor neurons from rhombomere 4 to rhombomere 6 during embryonic development. Also binds the DEAR/FBXW7-AS1 receptor. This chain is Vascular endothelial growth factor A (VEGFA), found in Equus caballus (Horse).